The chain runs to 450 residues: Protein tailless (450 aa).

Residues 31 to 108 (HVPCKVCRDH…VGMNKDAVQH (78 aa)) constitute a DNA-binding region (nuclear receptor). 2 NR C4-type zinc fingers span residues 34-54 (CKVC…CDGC) and 70-96 (CKSQ…LRKC). In terms of domain architecture, NR LBD spans 187-448 (VPRVPHHPVH…RLISDMYSQR (262 aa)).

This sequence belongs to the nuclear hormone receptor family. NR2 subfamily. In terms of assembly, monomer.

It localises to the nucleus. Orphan receptor that binds DNA as a monomer to hormone response elements (HRE) containing an extended core motif half-site sequence 5'-AAGTCA-3' in which the 5' flanking nucleotides participate in determining receptor specificity. This receptor binds to the consensus sequence [AG][AG]AAGTCAA. Plays a key role in the establishment of non-metameric domains at the anterior and posterior poles of the embryo. It may also play a role in the nervous system. The maternal terminal pathway activates the tll gene in the termini; TLL activity then represses segmentation and activates terminal-specific genes in these domains. Involved in the regulation of early eye development. In the embryonic visual system anlage drives cells to optic lobe as opposed to Bolwig's organ fate. The protein is Protein tailless (tll) of Drosophila virilis (Fruit fly).